The primary structure comprises 362 residues: Protein mab-21-like 3 (362 aa).

The protein belongs to the mab-21 family.

In Homo sapiens (Human), this protein is Protein mab-21-like 3 (MAB21L3).